Here is a 63-residue protein sequence, read N- to C-terminus: Large ribosomal subunit protein bL33 (63 aa).

This sequence belongs to the bacterial ribosomal protein bL33 family.

This Gloeobacter violaceus (strain ATCC 29082 / PCC 7421) protein is Large ribosomal subunit protein bL33.